We begin with the raw amino-acid sequence, 511 residues long: Maturase K (511 aa).

The protein belongs to the intron maturase 2 family. MatK subfamily.

Its subcellular location is the plastid. It localises to the chloroplast. Usually encoded in the trnK tRNA gene intron. Probably assists in splicing its own and other chloroplast group II introns. The chain is Maturase K from Melica altissima (Siberian melic grass).